A 720-amino-acid chain; its full sequence is Photosystem I P700 chlorophyll a apoprotein A1 (720 aa).

A run of 8 helical transmembrane segments spans residues 61–84 (VFSA…FHGA), 147–170 (LYCT…FHYH), 186–210 (LNHH…HVSL), 282–300 (TAHH…GHMY), 337–360 (WHAQ…HHMY), 376–402 (LSLF…IFMV), 424–446 (AIVS…LYIH), and 522–540 (FLVH…LILL). [4Fe-4S] cluster is bound by residues C564 and C573. A run of 2 helical transmembrane segments spans residues 580–601 (HVFL…HFSW) and 655–677 (LSAY…MFLF). H666 is a binding site for chlorophyll a'. Positions 674 and 682 each coordinate chlorophyll a. Position 683 (W683) interacts with phylloquinone. Residues 715 to 720 (AVGVAH) traverse the membrane as a helical segment.

This sequence belongs to the PsaA/PsaB family. In terms of assembly, the PsaA/B heterodimer binds the P700 chlorophyll special pair and subsequent electron acceptors. PSI consists of a core antenna complex that captures photons, and an electron transfer chain that converts photonic excitation into a charge separation. The eukaryotic PSI reaction center is composed of at least 11 subunits. P700 is a chlorophyll a/chlorophyll a' dimer, A0 is one or more chlorophyll a, A1 is one or both phylloquinones and FX is a shared 4Fe-4S iron-sulfur center. serves as cofactor.

The protein resides in the plastid. The protein localises to the chloroplast thylakoid membrane. It catalyses the reaction reduced [plastocyanin] + hnu + oxidized [2Fe-2S]-[ferredoxin] = oxidized [plastocyanin] + reduced [2Fe-2S]-[ferredoxin]. Functionally, psaA and PsaB bind P700, the primary electron donor of photosystem I (PSI), as well as the electron acceptors A0, A1 and FX. PSI is a plastocyanin-ferredoxin oxidoreductase, converting photonic excitation into a charge separation, which transfers an electron from the donor P700 chlorophyll pair to the spectroscopically characterized acceptors A0, A1, FX, FA and FB in turn. Oxidized P700 is reduced on the lumenal side of the thylakoid membrane by plastocyanin. The sequence is that of Photosystem I P700 chlorophyll a apoprotein A1 from Sequoia sempervirens (California redwood).